The chain runs to 224 residues: Urease accessory protein UreF (224 aa).

It belongs to the UreF family. In terms of assembly, ureD, UreF and UreG form a complex that acts as a GTP-hydrolysis-dependent molecular chaperone, activating the urease apoprotein by helping to assemble the nickel containing metallocenter of UreC. The UreE protein probably delivers the nickel.

It is found in the cytoplasm. Required for maturation of urease via the functional incorporation of the urease nickel metallocenter. This Pseudomonas putida (strain GB-1) protein is Urease accessory protein UreF.